We begin with the raw amino-acid sequence, 680 residues long: Fermitin family homolog 2 (680 aa).

The segment at 40–81 is interaction with membranes containing phosphatidylinositol phosphate; the sequence is HIGGVMLKLVEKLDVKKDWSDHALWWEKKRTWLLKTHWTLDK. The interval 141-165 is disordered; the sequence is LKKPRDPTKKKKKKLDDQSEDEALE. Phosphoserine occurs at positions 159, 181, 339, and 351. An FERM domain is found at 189–661; that stretch reads MTPTYDAHDG…GYIFLSTRAK (473 aa). Positions 380-476 constitute a PH domain; the sequence is KVFKPKKLTL…WMAACRLASK (97 aa). Lys383 provides a ligand contact to a 1,2-diacyl-sn-glycero-3-phospho-(1D-myo-inositol-3,4,5-trisphosphate). Ser666 bears the Phosphoserine mark.

This sequence belongs to the kindlin family. As to quaternary structure, interacts with ILK. Interacts with FBLIM1. Interacts with ITGB1 and ITGB3. Interacts with active, unphosphorylated CTNNB1. Identified in a complex with CTNNB1 and TCF7L2/TCF4. Interacts with ITGB1; the interaction is inhibited in presence of ITGB1BP1. As to expression, ubiquitous. Found in numerous tumor tissues.

The protein resides in the cytoplasm. It is found in the cell cortex. Its subcellular location is the cytoskeleton. It localises to the stress fiber. The protein localises to the cell junction. The protein resides in the focal adhesion. It is found in the membrane. Its subcellular location is the cell projection. It localises to the lamellipodium membrane. The protein localises to the nucleus. The protein resides in the myofibril. It is found in the sarcomere. Its subcellular location is the i band. It localises to the cell surface. Its function is as follows. Scaffolding protein that enhances integrin activation mediated by TLN1 and/or TLN2, but activates integrins only weakly by itself. Binds to membranes enriched in phosphoinositides. Enhances integrin-mediated cell adhesion onto the extracellular matrix and cell spreading; this requires both its ability to interact with integrins and with phospholipid membranes. Required for the assembly of focal adhesions. Participates in the connection between extracellular matrix adhesion sites and the actin cytoskeleton and also in the orchestration of actin assembly and cell shape modulation. Recruits FBLIM1 to focal adhesions. Plays a role in the TGFB1 and integrin signaling pathways. Stabilizes active CTNNB1 and plays a role in the regulation of transcription mediated by CTNNB1 and TCF7L2/TCF4 and in Wnt signaling. In Homo sapiens (Human), this protein is Fermitin family homolog 2 (FERMT2).